Reading from the N-terminus, the 134-residue chain is Small ribosomal subunit protein uS8c (134 aa).

It belongs to the universal ribosomal protein uS8 family. As to quaternary structure, part of the 30S ribosomal subunit.

The protein resides in the plastid. It is found in the chloroplast. Its function is as follows. One of the primary rRNA binding proteins, it binds directly to 16S rRNA central domain where it helps coordinate assembly of the platform of the 30S subunit. The chain is Small ribosomal subunit protein uS8c (rps8) from Chloranthus spicatus (Chulantree).